Reading from the N-terminus, the 234-residue chain is Large ribosomal subunit protein uL1 (234 aa).

It belongs to the universal ribosomal protein uL1 family. In terms of assembly, part of the 50S ribosomal subunit.

Functionally, binds directly to 23S rRNA. The L1 stalk is quite mobile in the ribosome, and is involved in E site tRNA release. In terms of biological role, protein L1 is also a translational repressor protein, it controls the translation of the L11 operon by binding to its mRNA. This Yersinia pseudotuberculosis serotype O:1b (strain IP 31758) protein is Large ribosomal subunit protein uL1.